Consider the following 214-residue polypeptide: Probable transaldolase (214 aa).

The active-site Schiff-base intermediate with substrate is K83.

Belongs to the transaldolase family. Type 3B subfamily.

It localises to the cytoplasm. It catalyses the reaction D-sedoheptulose 7-phosphate + D-glyceraldehyde 3-phosphate = D-erythrose 4-phosphate + beta-D-fructose 6-phosphate. It functions in the pathway carbohydrate degradation; pentose phosphate pathway; D-glyceraldehyde 3-phosphate and beta-D-fructose 6-phosphate from D-ribose 5-phosphate and D-xylulose 5-phosphate (non-oxidative stage): step 2/3. Functionally, transaldolase is important for the balance of metabolites in the pentose-phosphate pathway. The polypeptide is Probable transaldolase (Desulfotalea psychrophila (strain LSv54 / DSM 12343)).